A 158-amino-acid polypeptide reads, in one-letter code: uncharacterized protein (158 aa).

Disordered regions lie at residues Met1 to Trp86 and Ala138 to Phe158. Over residues Ser7–Ala76 the composition is skewed to low complexity.

This is an uncharacterized protein from Homo sapiens (Human).